Reading from the N-terminus, the 158-residue chain is 3-dehydroquinate dehydratase (158 aa).

Catalysis depends on Tyr22, which acts as the Proton acceptor. Substrate-binding residues include Asn74, His80, and Asp87. His100 serves as the catalytic Proton donor. Substrate contacts are provided by residues 101–102 (IS) and Arg111.

It belongs to the type-II 3-dehydroquinase family. In terms of assembly, homododecamer.

The enzyme catalyses 3-dehydroquinate = 3-dehydroshikimate + H2O. It participates in metabolic intermediate biosynthesis; chorismate biosynthesis; chorismate from D-erythrose 4-phosphate and phosphoenolpyruvate: step 3/7. Its function is as follows. Catalyzes a trans-dehydration via an enolate intermediate. The polypeptide is 3-dehydroquinate dehydratase (Helicobacter hepaticus (strain ATCC 51449 / 3B1)).